The primary structure comprises 95 residues: U6 snRNA-associated Sm-like protein LSm2 (95 aa).

The Sm domain occupies 2–76; the sequence is LFYSFFKSLV…VRYVQLPADE (75 aa). Thr79 carries the phosphothreonine modification.

The protein belongs to the snRNP Sm proteins family. In terms of assembly, component of the precatalytic spliceosome (spliceosome B complex). Component of the U4/U6-U5 tri-snRNP complex, a building block of the precatalytic spliceosome (spliceosome B complex). The U4/U6-U5 tri-snRNP complex is composed of the U4, U6 and U5 snRNAs and at least PRPF3, PRPF4, PRPF6, PRPF8, PRPF31, SNRNP200, TXNL4A, SNRNP40, SNRPB, SNRPD1, SNRPD2, SNRPD3, SNRPE, SNRPF, SNRPG, DDX23, CD2BP2, PPIH, SNU13, EFTUD2, SART1 and USP39, plus LSM2, LSM3, LSM4, LSM5, LSM6, LSM7 and LSM8. LSM2, LSM3, LSM4, LSM5, LSM6, LSM7 and LSM8 form a heptameric, ring-shaped subcomplex (the LSM2-8 complex) that is part of the U4/U6-U5 tri-snRNP complex and the precatalytic spliceosome.

Its subcellular location is the nucleus. In terms of biological role, plays a role in pre-mRNA splicing as component of the U4/U6-U5 tri-snRNP complex that is involved in spliceosome assembly, and as component of the precatalytic spliceosome (spliceosome B complex). The heptameric LSM2-8 complex binds specifically to the 3'-terminal U-tract of U6 snRNA. The chain is U6 snRNA-associated Sm-like protein LSm2 (LSM2) from Homo sapiens (Human).